Reading from the N-terminus, the 414-residue chain is Lipoyl synthase, mitochondrial (414 aa).

The transit peptide at 1-31 directs the protein to the mitochondrion; sequence MAVSTSHFRSLCASRPLSRTAIVGHISCRSY. The segment at 31–51 is disordered; it reads YATTEPSPSATSTSTTTTARR. Low complexity predominate over residues 32–48; it reads ATTEPSPSATSTSTTTT. C131, C136, C142, C162, C166, C169, and S377 together coordinate [4Fe-4S] cluster. The 222-residue stretch at 145 to 366 folds into the Radical SAM core domain; sequence GSDKSAATAT…RQRALDMGFL (222 aa).

It belongs to the radical SAM superfamily. Lipoyl synthase family. [4Fe-4S] cluster serves as cofactor.

Its subcellular location is the mitochondrion. The catalysed reaction is [[Fe-S] cluster scaffold protein carrying a second [4Fe-4S](2+) cluster] + N(6)-octanoyl-L-lysyl-[protein] + 2 oxidized [2Fe-2S]-[ferredoxin] + 2 S-adenosyl-L-methionine + 4 H(+) = [[Fe-S] cluster scaffold protein] + N(6)-[(R)-dihydrolipoyl]-L-lysyl-[protein] + 4 Fe(3+) + 2 hydrogen sulfide + 2 5'-deoxyadenosine + 2 L-methionine + 2 reduced [2Fe-2S]-[ferredoxin]. It participates in protein modification; protein lipoylation via endogenous pathway; protein N(6)-(lipoyl)lysine from octanoyl-[acyl-carrier-protein]: step 2/2. Functionally, catalyzes the radical-mediated insertion of two sulfur atoms into the C-6 and C-8 positions of the octanoyl moiety bound to the lipoyl domains of lipoate-dependent enzymes, thereby converting the octanoylated domains into lipoylated derivatives. This is Lipoyl synthase, mitochondrial from Aspergillus fumigatus (strain CBS 144.89 / FGSC A1163 / CEA10) (Neosartorya fumigata).